Here is a 227-residue protein sequence, read N- to C-terminus: Cytochrome c oxidase subunit 2 (227 aa).

Topologically, residues 1–14 (MAHPFQTGLQDATS) are mitochondrial intermembrane. The chain crosses the membrane as a helical span at residues 15–45 (PIMEELLHFHDHTLMIVFLISSLVLYIISIM). The Mitochondrial matrix segment spans residues 46–59 (LTTKLTHTNTMDAQ). The helical transmembrane segment at 60–87 (EVETVWTILPAIILIMIALPSLRILYMM) threads the bilayer. Residues 88–227 (DEINNPSLTV…YFEKWSASML (140 aa)) lie on the Mitochondrial intermembrane side of the membrane. Cu cation contacts are provided by H161, C196, E198, C200, H204, and M207. E198 contributes to the Mg(2+) binding site. Position 218 is a phosphotyrosine (Y218).

The protein belongs to the cytochrome c oxidase subunit 2 family. In terms of assembly, component of the cytochrome c oxidase (complex IV, CIV), a multisubunit enzyme composed of 14 subunits. The complex is composed of a catalytic core of 3 subunits MT-CO1, MT-CO2 and MT-CO3, encoded in the mitochondrial DNA, and 11 supernumerary subunits COX4I, COX5A, COX5B, COX6A, COX6B, COX6C, COX7A, COX7B, COX7C, COX8 and NDUFA4, which are encoded in the nuclear genome. The complex exists as a monomer or a dimer and forms supercomplexes (SCs) in the inner mitochondrial membrane with NADH-ubiquinone oxidoreductase (complex I, CI) and ubiquinol-cytochrome c oxidoreductase (cytochrome b-c1 complex, complex III, CIII), resulting in different assemblies (supercomplex SCI(1)III(2)IV(1) and megacomplex MCI(2)III(2)IV(2)). Found in a complex with TMEM177, COA6, COX18, COX20, SCO1 and SCO2. Interacts with TMEM177 in a COX20-dependent manner. Interacts with COX20. Interacts with COX16. The cofactor is Cu cation.

The protein resides in the mitochondrion inner membrane. It catalyses the reaction 4 Fe(II)-[cytochrome c] + O2 + 8 H(+)(in) = 4 Fe(III)-[cytochrome c] + 2 H2O + 4 H(+)(out). Its function is as follows. Component of the cytochrome c oxidase, the last enzyme in the mitochondrial electron transport chain which drives oxidative phosphorylation. The respiratory chain contains 3 multisubunit complexes succinate dehydrogenase (complex II, CII), ubiquinol-cytochrome c oxidoreductase (cytochrome b-c1 complex, complex III, CIII) and cytochrome c oxidase (complex IV, CIV), that cooperate to transfer electrons derived from NADH and succinate to molecular oxygen, creating an electrochemical gradient over the inner membrane that drives transmembrane transport and the ATP synthase. Cytochrome c oxidase is the component of the respiratory chain that catalyzes the reduction of oxygen to water. Electrons originating from reduced cytochrome c in the intermembrane space (IMS) are transferred via the dinuclear copper A center (CU(A)) of subunit 2 and heme A of subunit 1 to the active site in subunit 1, a binuclear center (BNC) formed by heme A3 and copper B (CU(B)). The BNC reduces molecular oxygen to 2 water molecules using 4 electrons from cytochrome c in the IMS and 4 protons from the mitochondrial matrix. The chain is Cytochrome c oxidase subunit 2 (MT-CO2) from Ailuropoda melanoleuca (Giant panda).